A 452-amino-acid chain; its full sequence is Isocitrate dehydrogenase [NADP], mitochondrial (452 aa).

A mitochondrion-targeting transit peptide spans Met-1–Tyr-39. Residues Lys-45, Lys-48, Lys-67, and Lys-69 each carry the N6-acetyllysine modification. N6-acetyllysine; alternate is present on residues Lys-80 and Lys-106. Residues Lys-80 and Lys-106 each carry the N6-succinyllysine; alternate modification. Residues Thr-115–Thr-117 and Arg-122 each bind NADP(+). Thr-117 contacts D-threo-isocitrate. D-threo-isocitrate is bound by residues Ser-134–Arg-140 and Arg-149. Lys-155 is modified (N6-acetyllysine). Lys-166 carries the N6-acetyllysine; alternate modification. Lys-166 is subject to N6-succinyllysine; alternate. Arg-172 serves as a coordination point for D-threo-isocitrate. Lys-180 and Lys-193 each carry N6-acetyllysine; alternate. Residues Lys-180 and Lys-193 each carry the N6-succinyllysine; alternate modification. Residue Lys-199 is modified to N6-acetyllysine. Lys-256 is modified (N6-acetyllysine; alternate). Lys-256 carries the N6-succinyllysine; alternate modification. N6-acetyllysine occurs at positions 263, 272, 275, and 280. Residue Lys-282 is modified to N6-acetyllysine; alternate. Lys-282 is modified (N6-succinyllysine; alternate). Position 291 (Asp-291) interacts with Mn(2+). Lys-299 is a binding site for NADP(+). Asp-314 lines the Mn(2+) pocket. NADP(+) is bound by residues Gly-349–His-354 and Asn-367. N6-acetyllysine; alternate is present on Lys-384. N6-succinyllysine; alternate is present on Lys-384. N6-acetyllysine is present on residues Lys-400, Lys-413, and Lys-442.

Belongs to the isocitrate and isopropylmalate dehydrogenases family. Homodimer. Requires Mg(2+) as cofactor. Mn(2+) serves as cofactor. Post-translationally, acetylation at Lys-413 dramatically reduces catalytic activity. Deacetylated by SIRT3. As to expression, predominantly expressed in heart, liver and kidney. Expressed in activated B lymphocytes.

The protein localises to the mitochondrion. It catalyses the reaction D-threo-isocitrate + NADP(+) = 2-oxoglutarate + CO2 + NADPH. Functionally, plays a role in intermediary metabolism and energy production. It may tightly associate or interact with the pyruvate dehydrogenase complex. The protein is Isocitrate dehydrogenase [NADP], mitochondrial (Idh2) of Mus musculus (Mouse).